The chain runs to 67 residues: Beta-defensin 103A (67 aa).

The N-terminal stretch at 1–22 (MRIHYLLFTLLFLFLVPVPGHG) is a signal peptide. 3 disulfides stabilise this stretch: Cys33/Cys62, Cys40/Cys55, and Cys45/Cys63.

This sequence belongs to the beta-defensin family.

It localises to the secreted. In terms of biological role, exhibits antimicrobial activity against Gram-positive and Gram-negative bacteria. This is Beta-defensin 103A (DEFB103A) from Gorilla gorilla gorilla (Western lowland gorilla).